The chain runs to 523 residues: Probable lipid II flippase MurJ (523 aa).

Transmembrane regions (helical) follow at residues 98–118, 146–166, 170–190, 201–221, 246–266, 284–304, 328–348, 360–380, 395–415, 422–442, 461–481, and 489–509; these read AFYS…IVYV, IMFG…ILNA, FGLP…FTFM, GLAW…AVAL, MLPG…NLYF, LLEL…LPTL, LFLA…IIEV, VQMT…VSCS, VPMV…PVLM, GLMI…MGLL, FVLA…LMAQ, and LALF…AYVL.

Belongs to the MurJ/MviN family.

It is found in the cell inner membrane. It participates in cell wall biogenesis; peptidoglycan biosynthesis. Involved in peptidoglycan biosynthesis. Transports lipid-linked peptidoglycan precursors from the inner to the outer leaflet of the cytoplasmic membrane. This is Probable lipid II flippase MurJ from Bdellovibrio bacteriovorus (strain ATCC 15356 / DSM 50701 / NCIMB 9529 / HD100).